The primary structure comprises 196 residues: Orotate phosphoribosyltransferase (196 aa).

117-125 contacts 5-phospho-alpha-D-ribose 1-diphosphate; sequence EDIVTTGLS. Residues threonine 121 and arginine 149 each contribute to the orotate site.

This sequence belongs to the purine/pyrimidine phosphoribosyltransferase family. PyrE subfamily. Homodimer. Mg(2+) is required as a cofactor.

It catalyses the reaction orotidine 5'-phosphate + diphosphate = orotate + 5-phospho-alpha-D-ribose 1-diphosphate. Its pathway is pyrimidine metabolism; UMP biosynthesis via de novo pathway; UMP from orotate: step 1/2. In terms of biological role, catalyzes the transfer of a ribosyl phosphate group from 5-phosphoribose 1-diphosphate to orotate, leading to the formation of orotidine monophosphate (OMP). The chain is Orotate phosphoribosyltransferase from Methylorubrum extorquens (strain PA1) (Methylobacterium extorquens).